Consider the following 460-residue polypeptide: Light-independent protochlorophyllide reductase subunit N (460 aa).

[4Fe-4S] cluster contacts are provided by Cys22, Cys47, and Cys107.

Belongs to the BchN/ChlN family. In terms of assembly, protochlorophyllide reductase is composed of three subunits; ChlL, ChlN and ChlB. Forms a heterotetramer of two ChlB and two ChlN subunits. The cofactor is [4Fe-4S] cluster.

The protein localises to the plastid. Its subcellular location is the cyanelle. It carries out the reaction chlorophyllide a + oxidized 2[4Fe-4S]-[ferredoxin] + 2 ADP + 2 phosphate = protochlorophyllide a + reduced 2[4Fe-4S]-[ferredoxin] + 2 ATP + 2 H2O. It participates in porphyrin-containing compound metabolism; chlorophyll biosynthesis (light-independent). In terms of biological role, component of the dark-operative protochlorophyllide reductase (DPOR) that uses Mg-ATP and reduced ferredoxin to reduce ring D of protochlorophyllide (Pchlide) to form chlorophyllide a (Chlide). This reaction is light-independent. The NB-protein (ChlN-ChlB) is the catalytic component of the complex. This is Light-independent protochlorophyllide reductase subunit N from Cyanophora paradoxa.